Reading from the N-terminus, the 359-residue chain is PWWP domain-containing protein 1 (359 aa).

A disordered region spans residues 1–37 (MNNARTNAKRRRLSSKQGGLSISEGKESNIPSVVEES). The PWWP domain occupies 52–114 (FGDRILVKAP…RNSVKPLLDS (63 aa)). Disordered regions lie at residues 133–161 (AYEA…AAEE) and 204–255 (VAST…SPLN). Residues 204–224 (VASTSRSSTQLSDQRYPLSSN) are compositionally biased toward polar residues. Ser-252 is modified (phosphoserine).

Interacts with set9 and histone H4K20me1. Associates with nucleosomes.

The protein localises to the nucleus. Its function is as follows. Necessary for DNA damage checkpoint activation. Required for the association of set9 with chromatin and subsequent methylation of H4K20. Associates with H4K20me1 to increase the concentration of set9 on chromatin to perform H4K20me3. H4K20me3 is mainly enriched at heterochromatin and is required for proper heterochromatin assembly. In Schizosaccharomyces pombe (strain 972 / ATCC 24843) (Fission yeast), this protein is PWWP domain-containing protein 1 (pdp1).